A 217-amino-acid polypeptide reads, in one-letter code: Large ribosomal subunit protein uL1 (217 aa).

It belongs to the universal ribosomal protein uL1 family. As to quaternary structure, part of the 50S ribosomal subunit.

Binds directly to 23S rRNA. Probably involved in E site tRNA release. In terms of biological role, protein L1 is also a translational repressor protein, it controls the translation of its operon by binding to its mRNA. This is Large ribosomal subunit protein uL1 from Thermoplasma acidophilum (strain ATCC 25905 / DSM 1728 / JCM 9062 / NBRC 15155 / AMRC-C165).